The chain runs to 118 residues: Basic phospholipase A2 nigroxin B (118 aa).

Disulfide bonds link cysteine 11/cysteine 70, cysteine 25/cysteine 117, cysteine 27/cysteine 43, cysteine 42/cysteine 98, cysteine 49/cysteine 91, cysteine 59/cysteine 84, and cysteine 77/cysteine 89. 3 residues coordinate Ca(2+): tyrosine 26, glycine 28, and glycine 30. Residue histidine 46 is part of the active site. Position 47 (aspartate 47) interacts with Ca(2+). The active site involves aspartate 92.

It belongs to the phospholipase A2 family. Group I subfamily. D49 sub-subfamily. Ca(2+) is required as a cofactor. In terms of tissue distribution, expressed by the venom gland.

The protein resides in the secreted. The enzyme catalyses a 1,2-diacyl-sn-glycero-3-phosphocholine + H2O = a 1-acyl-sn-glycero-3-phosphocholine + a fatty acid + H(+). In terms of biological role, snake venom phospholipase A2 (PLA2) that has only a weak enzymatic activity. It has a myotoxic activity in vivo (dystrophic effect). PLA2 catalyzes the calcium-dependent hydrolysis of the 2-acyl groups in 3-sn-phosphoglycerides. This chain is Basic phospholipase A2 nigroxin B, found in Micrurus nigrocinctus (Central American coral snake).